Here is a 318-residue protein sequence, read N- to C-terminus: Dehydration-responsive element-binding protein 2E (318 aa).

Basic residues predominate over residues 1 to 15; sequence MESYGRKRAWKKGPT. Residues 1–24 are disordered; that stretch reads MESYGRKRAWKKGPTRGKGGPQNA. Positions 27 to 84 form a DNA-binding region, AP2/ERF; sequence EYRGVRQRTWGKWVAEIREPNKRTRLWLGSFATAEEAALAYDEAARRLYGPDAFLNLP. The segment at 140–178 is disordered; the sequence is ELKNSSSSPTKPPPRTPTRANPPPPPLPTSSPCSTVTNS. Positions 149–168 are enriched in pro residues; it reads TKPPPRTPTRANPPPPPLPT.

It belongs to the AP2/ERF transcription factor family. ERF subfamily.

The protein localises to the nucleus. Probable transcriptional activator that binds to the DNA sequence 5'-[AG]CCGAC-3' of the cis-acting dehydration-responsive element (DRE). The protein is Dehydration-responsive element-binding protein 2E (DREB2E) of Oryza sativa subsp. japonica (Rice).